Consider the following 906-residue polypeptide: Protein translocase subunit SecA (906 aa).

Residues Gln87, 105–109, and Asp513 each bind ATP; that span reads GEGKT. The segment at 860-906 is disordered; that stretch reads QVNKGEVVSDENTGDDTFVRNEKKVGRNEPCPCGSGKKYKQCHGKLD. A compositionally biased stretch (basic and acidic residues) spans 876 to 886; it reads TFVRNEKKVGR. Positions 890, 892, 901, and 902 each coordinate Zn(2+). Residues 896 to 906 show a composition bias toward basic residues; it reads KKYKQCHGKLD.

This sequence belongs to the SecA family. As to quaternary structure, monomer and homodimer. Part of the essential Sec protein translocation apparatus which comprises SecA, SecYEG and auxiliary proteins SecDF-YajC and YidC. Zn(2+) serves as cofactor.

The protein resides in the cell inner membrane. The protein localises to the cytoplasm. It catalyses the reaction ATP + H2O + cellular proteinSide 1 = ADP + phosphate + cellular proteinSide 2.. Part of the Sec protein translocase complex. Interacts with the SecYEG preprotein conducting channel. Has a central role in coupling the hydrolysis of ATP to the transfer of proteins into and across the cell membrane, serving both as a receptor for the preprotein-SecB complex and as an ATP-driven molecular motor driving the stepwise translocation of polypeptide chains across the membrane. This is Protein translocase subunit SecA from Psychromonas ingrahamii (strain DSM 17664 / CCUG 51855 / 37).